Here is a 385-residue protein sequence, read N- to C-terminus: tRNA (guanine(26)-N(2))-dimethyltransferase (385 aa).

Residues 1–379 enclose the Trm1 methyltransferase domain; the sequence is MNITEGVVEL…ATIAEIRSAT (379 aa). 5 residues coordinate S-adenosyl-L-methionine: Arg-37, Arg-67, Asp-82, Asp-108, and Ala-109. 4 residues coordinate Zn(2+): Cys-247, Cys-250, Cys-267, and Cys-270.

The protein belongs to the class I-like SAM-binding methyltransferase superfamily. Trm1 family.

It catalyses the reaction guanosine(26) in tRNA + 2 S-adenosyl-L-methionine = N(2)-dimethylguanosine(26) in tRNA + 2 S-adenosyl-L-homocysteine + 2 H(+). Dimethylates a single guanine residue at position 26 of a number of tRNAs using S-adenosyl-L-methionine as donor of the methyl groups. The protein is tRNA (guanine(26)-N(2))-dimethyltransferase of Haloquadratum walsbyi (strain DSM 16790 / HBSQ001).